A 364-amino-acid chain; its full sequence is Peptidyl-prolyl cis-trans isomerase D (364 aa).

Residues 7–170 form the PPIase cyclophilin-type domain; it reads YFDITIGNKP…EDAVIAKCGE (164 aa). TPR repeat units follow at residues 208–241, 261–294, and 301–334; these read ATHL…LNEK, IPCY…DSKY, and TKAY…DPED.

Belongs to the cyclophilin-type PPIase family. PPIase D subfamily.

The protein resides in the cytoplasm. It carries out the reaction [protein]-peptidylproline (omega=180) = [protein]-peptidylproline (omega=0). PPIases accelerate the folding of proteins. It catalyzes the cis-trans isomerization of proline imidic peptide bonds in oligopeptides. The sequence is that of Peptidyl-prolyl cis-trans isomerase D (cyp12) from Rhizopus delemar (strain RA 99-880 / ATCC MYA-4621 / FGSC 9543 / NRRL 43880) (Mucormycosis agent).